The primary structure comprises 511 residues: Cytochrome P450 71A6 (511 aa).

The next 2 helical transmembrane spans lie at 1-15 (ILIA…LFFL) and 61-77 (VMQL…ASSP). N-linked (GlcNAc...) asparagine glycans are attached at residues asparagine 90, asparagine 96, and asparagine 167. Cysteine 450 is a heme binding site.

This sequence belongs to the cytochrome P450 family. Heme is required as a cofactor.

Its subcellular location is the membrane. The protein is Cytochrome P450 71A6 (CYP71A6) of Nepeta racemosa (Catmint).